The following is a 373-amino-acid chain: ADP-forming sulfoacetate-CoA ligase subunit SauC (373 aa).

One can recognise an ATP-grasp domain in the interval 9–249 (KEAFREKGLP…YLQFNGDIAL (241 aa)). ATP is bound at residue 35 to 97 (FAEVGFPCVL…EEAVDIDREI (63 aa)). Residues Glu-186 and Asn-188 each contribute to the Mg(2+) site.

This sequence belongs to the succinate/malate CoA ligase beta subunit family. Forms a complex with SauD. Requires Mg(2+) as cofactor.

It catalyses the reaction sulfoacetate + ATP + CoA = sulfoacetyl-CoA + ADP + phosphate. Functionally, involved in the degradation of sulfoacetate. Catalyzes the CoA- and ATP-dependent conversion of sulfoacetate to sulfoacetyl-CoA and ADP. Cannot use other sulfonic and carboxylic acids, and shows only residual activity with 3-sulfopropanoate and malonic acid. The polypeptide is ADP-forming sulfoacetate-CoA ligase subunit SauC (Bilophila wadsworthia (strain 3_1_6)).